We begin with the raw amino-acid sequence, 200 residues long: Superoxide dismutase [Fe] (200 aa).

H28, H82, D165, and H169 together coordinate Fe cation.

The protein belongs to the iron/manganese superoxide dismutase family. As to quaternary structure, homodimer. Requires Fe cation as cofactor.

It carries out the reaction 2 superoxide + 2 H(+) = H2O2 + O2. In terms of biological role, destroys superoxide anion radicals which are normally produced within the cells and which are toxic to biological systems. This is Superoxide dismutase [Fe] (sodB) from Rhodobacter capsulatus (Rhodopseudomonas capsulata).